The primary structure comprises 321 residues: MATH domain and coiled-coil domain-containing protein At3g58410 (321 aa).

Residues 6-128 form the MATH domain; the sequence is GKKFAWVIKN…NGELMIVAEV (123 aa). Residues 255-310 are a coiled coil; the sequence is KVDWLEKKLDQVRDKKEKERSCLAKLQETEETLLKLKQKCTELDALMDTEKAELSA.

This is MATH domain and coiled-coil domain-containing protein At3g58410 from Arabidopsis thaliana (Mouse-ear cress).